Consider the following 1009-residue polypeptide: Adhesion G-protein coupled receptor G2 (1009 aa).

Residues Met1–Ser37 form the signal peptide. Residues Leu38 to Met617 lie on the Extracellular side of the membrane. 10 N-linked (GlcNAc...) asparagine glycosylation sites follow: Asn43, Asn77, Asn91, Asn103, Asn109, Asn127, Asn136, Asn154, Asn178, and Asn186. Disordered regions lie at residues Met279–Pro305 and Ser325–Pro346. Residues Thr280 to Pro293 are compositionally biased toward polar residues. Residues Asn362, Asn427, Asn448, Asn453, Asn520, Asn534, Asn539, Asn543, and Asn589 are each glycosylated (N-linked (GlcNAc...) asparagine). The GAIN-B domain maps to Asn453 to Ser611. 2 disulfide bridges follow: Cys562–Cys593 and Cys581–Cys595. The tract at residues Cys562–Ser611 is GPS. Residues Ser600–Ser611 form a stachel region. A helical transmembrane segment spans residues Met618–Val640. The Cytoplasmic portion of the chain corresponds to Thr641–Lys655. Residues Ile656–Leu679 traverse the membrane as a helical segment. Over Tyr680–Arg683 the chain is Extracellular. The chain crosses the membrane as a helical span at residues Gly684–Phe709. A disulfide bridge links Cys686 with Cys770. Over His710 to Leu728 the chain is Cytoplasmic. A helical membrane pass occupies residues Lys729 to Asp751. At Asn752–Val776 the chain is on the extracellular side. Residues Val777–Val802 traverse the membrane as a helical segment. The Cytoplasmic segment spans residues Gln803–Asp823. Residues Leu824–Trp845 traverse the membrane as a helical segment. The Extracellular segment spans residues Gly846–Val850. N-linked (GlcNAc...) asparagine glycosylation is present at Asn849. Residues Thr851–Cys872 form a helical membrane-spanning segment. Position 860 (Asn860) interacts with 3beta-hydroxyandrost-5-en-17-one. Residues Ala873–Met1009 lie on the Cytoplasmic side of the membrane. A Phosphoserine modification is found at Ser1002.

It belongs to the G-protein coupled receptor 2 family. Adhesion G-protein coupled receptor (ADGR) subfamily. Heterodimer of 2 chains generated by proteolytic processing; the large extracellular N-terminal fragment and the membrane-bound C-terminal fragment predominantly remain associated and non-covalently linked. Interacts with CFTR. Proteolytically cleaved into 2 subunits, an extracellular subunit and a seven-transmembrane subunit. Post-translationally, highly glycosylated. As to expression, epididymis-specific expression (at protein level). Associated with apical membranes of efferent ductule and proximal epididymal duct epithelia. Mainly expressed in the nonciliated principal cells of the proximal excurrent ducts.

Its subcellular location is the apical cell membrane. Its activity is regulated as follows. Forms a heterodimer of 2 chains generated by proteolytic processing that remain associated through non-covalent interactions mediated by the GAIN-B domain. In the inactivated receptor, the Stachel sequence (also named stalk) is embedded in the GAIN-B domain, where it adopts a beta-strand conformation. On activation, the Stachel moves into the 7 transmembrane region and adopts a twisted hook-shaped configuration that forms contacts within the receptor, leading to coupling of a G-alpha protein, which activates signaling. The cleaved GAIN-B and N-terminal domains can then dissociate from the rest of the receptor. Deoxycorticosterone (DOC) acts as an antagonist of ADGRG2. Adhesion G-protein coupled receptor (aGPCR) for steroid hormones, such as dehydroepiandrosterone (DHEA; also named 3beta-hydroxyandrost-5-en-17-one) and androstenedione. Involved in a signal transduction pathway controlling epididymal function and male fertility. Ligand binding causes a conformation change that triggers signaling via guanine nucleotide-binding proteins (G proteins) and modulates the activity of downstream effectors, such as adenylate cyclase. ADGRG2 is coupled to G(s) G proteins and mediates activation of adenylate cyclase activity. Also able to couple with G(q) G proteins in vitro. May regulate fluid exchange within epididymis. In Mus musculus (Mouse), this protein is Adhesion G-protein coupled receptor G2.